The sequence spans 20 residues: Expansin-B (20 aa).

A disordered region spans residues 1 to 20 (GPPKVAPGKXISASFGGEWL).

It belongs to the expansin family. Expansin B subfamily.

The protein localises to the secreted. It is found in the cell wall. Its subcellular location is the membrane. In terms of biological role, may aid fertilization by loosening the cell wall of the stigma and style, thereby facilitating penetration of the pollen tube. Acts selectively on grass cell walls, which are relatively poor in pectins and xyloglucans and rich in glucuronoarabinoxylans and (1-3),(1-4)-beta-D-glucans, when compared with cell walls of other angiosperms, including other monocots. This Paspalum notatum (Bahia grass) protein is Expansin-B.